The primary structure comprises 630 residues: ATP-dependent zinc metalloprotease FtsH 2 (630 aa).

The Cytoplasmic portion of the chain corresponds to 1–8 (MNNNPNRR). The helical transmembrane segment at 9-29 (GSLIGPLFIYFILAMLIFMSI) threads the bilayer. Residues 30–110 (SQLNTSNITE…YIQNTGASWW (81 aa)) lie on the Periplasmic side of the membrane. The chain crosses the membrane as a helical span at residues 111-131 (VTMLIYMLPLIILMFFWFWMF). Residues 132–630 (RRSGTGEGIP…KETNLFVSYA (499 aa)) are Cytoplasmic-facing. 203–210 (GPPGTGKT) contributes to the ATP binding site. Position 425 (histidine 425) interacts with Zn(2+). Residue glutamate 426 is part of the active site. Residues histidine 429 and aspartate 502 each contribute to the Zn(2+) site.

It in the central section; belongs to the AAA ATPase family. This sequence in the C-terminal section; belongs to the peptidase M41 family. Homohexamer. Requires Zn(2+) as cofactor.

The protein localises to the cell inner membrane. Acts as a processive, ATP-dependent zinc metallopeptidase for both cytoplasmic and membrane proteins. Plays a role in the quality control of integral membrane proteins. The polypeptide is ATP-dependent zinc metalloprotease FtsH 2 (Petrotoga mobilis (strain DSM 10674 / SJ95)).